We begin with the raw amino-acid sequence, 35 residues long: Small toxic polypeptide LdrD (35 aa).

The chain crosses the membrane as a helical span at residues 10-32; the sequence is FWHDLAAPVIAGILASMIVNWLN.

This sequence belongs to the Ldr toxic peptide family.

Its subcellular location is the cell inner membrane. In terms of biological role, toxic component of a type I toxin-antitoxin (TA) system. Overexpression causes rapid cell killing and nucleoid condensation of the host cell. Overexpression induces stress-response and a number of membrane protein genes. May inhibit ATP synthesis due to its insertion in the cell inner membrane. This Escherichia coli (strain K12) protein is Small toxic polypeptide LdrD (ldrD).